A 7081-amino-acid chain; its full sequence is Leucine-rich repeat transmembrane protein CCDC168 (7081 aa).

Residues 37-57 (WVAIFFIILLGIIFEIILMKA) form a helical membrane-spanning segment. 2 LRR repeats span residues 233–256 (PCPL…VRNQ) and 420–445 (NAEF…SVKA). Residues 717–745 (EDLQSSENSHLQLSNGEELPTSTPKTQRC) are disordered. Residues 718 to 742 (DLQSSENSHLQLSNGEELPTSTPKT) are compositionally biased toward polar residues. Residues 865-890 (ADTLRIIRLSHSASKQEKLPDEKETQ) form an LRR 3 repeat. Residues 943-1009 (QISSGSSKAP…DPKNPLTMPE (67 aa)) form a disordered region. Polar residues predominate over residues 958 to 970 (VQPQTLSTQTILE). The span at 981-999 (QVEKVKQSTDRPTDRESAG) shows a compositional bias: basic and acidic residues. An LRR 4 repeat occupies 1050 to 1075 (LPAVALGSFNNHLLTLPYFKRQEIKK). Polar residues-rich tracts occupy residues 1274 to 1286 (KCTA…SPIS) and 1295 to 1304 (LNQTRESYIP). A disordered region spans residues 1274–1304 (KCTADSETPSPISGKSLIGDPLNQTRESYIP). Residues 1501–1527 (NCLTLELHINGQRLQHQTGFEQTTLET) form an LRR 5 repeat. Basic and acidic residues-rich tracts occupy residues 1773–1784 (ETEKDTLREKRL) and 1793–1804 (TSPHEDSITSRD). Disordered stretches follow at residues 1773–1804 (ETEK…TSRD), 1954–1973 (KSPH…ESGS), 2008–2031 (STHQ…EGRS), and 2083–2103 (TGKS…NPRR). The span at 1964–1973 (ANLTDMESGS) shows a compositional bias: polar residues. The LRR 6 repeat unit spans residues 2373–2397 (KNQINTIQLSERKIILNPKCLTMKE). The disordered stretch occupies residues 2637–2680 (GRHSPASEEMKRQNGRLKMADRSSPQGRPLQAKQSAVSQSPDTA). A compositionally biased stretch (polar residues) spans 2668–2678 (AKQSAVSQSPD). 5 LRR repeats span residues 2727–2749 (SKIH…KTRA), 2832–2855 (IQQQ…VYDS), 2862–2889 (IKKL…KLEK), 3433–3458 (LSSR…RLEW), and 3630–3653 (ILSL…NVKS). The interval 3730–3756 (SLSHSNSNSRTKAGKDKSGTLKGCLPP) is disordered. The stretch at 3875–3898 (MRGITRFCLSSSTQQELSDTMEKC) is one LRR 12 repeat. 8 disordered regions span residues 4119–4260 (ELSH…DGDK), 4293–4428 (QGII…KQET), 4729–4756 (QESL…LLPQ), 4794–4817 (SPLS…QDRT), 4831–4859 (MPSL…RLAN), 4928–4955 (GVQE…YLNC), 4966–4985 (LGKT…SDSG), and 5191–5212 (QKVK…SPLH). Composition is skewed to basic and acidic residues over residues 4121–4133 (SHQK…EKAD), 4147–4176 (KAKD…DKGL), 4192–4245 (EPGK…EQQK), 4329–4361 (QKAK…DLKG), 4375–4401 (EPGK…NRDG), and 4415–4426 (EQEKRDGHKSKQ). Over residues 4731–4743 (SLPSRQTAPTKPT) the composition is skewed to polar residues. Composition is skewed to basic and acidic residues over residues 4746-4756 (LVKKEKQLLPQ) and 4798-4817 (KRKE…QDRT). Positions 5203 to 5212 (KSPSRSSPLH) are enriched in polar residues. An LRR 13 repeat occupies 5311 to 5336 (LSQLELDKETHLGNEMLRLKRPILRR). A disordered region spans residues 5467 to 5496 (LPDTEKTADAEARSGDVRKGKPHRSQKENR). The segment covering 5469–5496 (DTEKTADAEARSGDVRKGKPHRSQKENR) has biased composition (basic and acidic residues). One copy of the LRR 14 repeat lies at 5522–5545 (LNAKELVLNINKLEKKVHKDKDEA). Disordered stretches follow at residues 5564 to 5583 (LDSG…SSCP) and 5763 to 5792 (QQET…SNDR). The segment covering 5779 to 5792 (KFDKPKEDGQSNDR) has biased composition (basic and acidic residues). LRR repeat units follow at residues 5901–5924 (KQAL…LFPP), 6259–6282 (PDLR…ECPS), 6419–6442 (HLES…SLQM), 6552–6575 (HFSV…SYAM), and 6613–6637 (QIDL…TFPK). Disordered stretches follow at residues 6859 to 6878 (CKSH…SPDW) and 6916 to 6950 (APLT…RSDL). Positions 6860–6871 (KSHKSRKYRSSS) are enriched in basic residues. Over residues 6937–6950 (HPESQERKKARSDL) the composition is skewed to basic and acidic residues. One copy of the LRR 20 repeat lies at 7012–7036 (NRPFFFACVPADSLEVIPKTIRWTI).

Its subcellular location is the membrane. The polypeptide is Leucine-rich repeat transmembrane protein CCDC168 (Homo sapiens (Human)).